The chain runs to 1139 residues: Tip attachment protein J (1139 aa).

This sequence belongs to the Caudoviricetes tip attachment protein J family. Ubiquitinated by the Bil antiviral defense system when the Bil system is expressed in E.coli MG1655 and infected with this virus, or when this protein is expressed in a strain with the Bil system.

The protein localises to the virion. It is found in the host cytoplasm. Functionally, attaches the virion to the host receptor, inducing viral DNA ejection. During tail assembly, initiates distal tail tip assembly. During virus entry to host cell, binds strongly to host receptor in an irreversible attachment. The binding induces structural changes in the tail leading to viral DNA injection. This Escherichia phage SECphi4 protein is Tip attachment protein J.